Here is a 414-residue protein sequence, read N- to C-terminus: MSDLRRKRVKTNPIPDHVPPALVRHFSLFTSPGMAPTPNGDPHAAVACVHDDGPPIFYSPSNTRDGRGTWVITRARDQRRVLEDTETFSSHRSIFASALGEHWPVIPLELDPPAHGVFRALLNPLFSSRRVLALEPTIHARAGALIDCIAKEKTSCDVMKDFALPFTFSVFLSFLGLSQRRSEVLVGWVSDLLHGNAEKRRAAARSVVAFIDEMAAMRRKSPAVDFMTFVVQAKIEGRSLTEEEVRGIGVLFLVAGLDTVAAAIGFDMAYLARNPKHQELLRNEPARLGLAAEELLRAYSTVQIIRVATKDIEFEGVPIREGDYVSCPAMIANRDPSEFKCPNTIDLARQDNQHTAFGYGPHLCHGAHLARREIVIGLREWLARIPAFRIKEGTAPITHGGHVFGISNIILTWA.

Cysteine 364 provides a ligand contact to heme.

Belongs to the cytochrome P450 family. The cofactor is heme.

Functionally, cytochromes P450 are a group of heme-thiolate monooxygenases. They oxidize a variety of structurally unrelated compounds, including steroids, fatty acids, and xenobiotics. The chain is Probable cytochrome P450 127A1 (cyp127A1) from Sinorhizobium fredii (strain NBRC 101917 / NGR234).